Here is a 302-residue protein sequence, read N- to C-terminus: Oligopeptide transport system permease protein OppC (302 aa).

Residues 1–39 (MMLSKKNSETLENFSEKLEVEGRSLWQDARRRFMHNRAA) lie on the Cytoplasmic side of the membrane. A helical membrane pass occupies residues 40 to 62 (VASLIVLFLIALFVTVAPMLSQF). At 63–102 (TYFDTDWGMMSSAPDMASGHYFGTDSSGRDLLVRVAIGGR) the chain is on the periplasmic side. The ABC transmembrane type-1 domain occupies 101 to 290 (GRISLMVGIA…VTLFCFNFIG (190 aa)). Residues 103–125 (ISLMVGIAAALVAVIVGTLYGSL) traverse the membrane as a helical segment. At 126-137 (SGYLGGKIDSVM) the chain is on the cytoplasmic side. A helical membrane pass occupies residues 138-160 (MRLLEILNSFPFMFFVILLVTFF). The Periplasmic portion of the chain corresponds to 161–163 (GQN). Residues 164–183 (ILLIFVAIGMVSWLDMARIV) traverse the membrane as a helical segment. Residues 184–213 (RGQTLSLKRKEFIEAAQVGGVSTASIVIRH) lie on the Cytoplasmic side of the membrane. Residues 214–236 (IVPNVLGVVVVYASLLVPSMILF) form a helical membrane-spanning segment. The Periplasmic segment spans residues 237 to 267 (ESFLSFLGLGTQEPLSSWGALLSDGANSMEV). The helical transmembrane segment at 268–290 (SPWLLLFPAGFLVVTLFCFNFIG) threads the bilayer. The Cytoplasmic portion of the chain corresponds to 291–302 (DGLRDALDPKDR).

The protein belongs to the binding-protein-dependent transport system permease family. OppBC subfamily. The complex is composed of two ATP-binding proteins (OppD and OppF), two transmembrane proteins (OppB and OppC) and a solute-binding protein (OppA).

Its subcellular location is the cell inner membrane. In terms of biological role, part of the ABC transporter complex OppABCDF involved in the uptake of oligopeptides, including the cell wall murein tripeptide L-alanyl-gamma-D-glutamyl-meso-diaminopimelate. Responsible for the translocation of the substrate across the membrane. Plays an important nutritional role and is involved in the recycling of cell wall peptides. This chain is Oligopeptide transport system permease protein OppC, found in Salmonella typhimurium (strain LT2 / SGSC1412 / ATCC 700720).